A 66-amino-acid polypeptide reads, in one-letter code: Large ribosomal subunit protein bL35 (66 aa).

Positions 1–26 are enriched in basic residues; it reads MPKMKTHRGSAKRFKKTGSGKLKRSH. The segment at 1 to 48 is disordered; it reads MPKMKTHRGSAKRFKKTGSGKLKRSHAYTSHLFANKSQKQKRKLRKSA.

This sequence belongs to the bacterial ribosomal protein bL35 family.

The protein is Large ribosomal subunit protein bL35 of Bacillus licheniformis (strain ATCC 14580 / DSM 13 / JCM 2505 / CCUG 7422 / NBRC 12200 / NCIMB 9375 / NCTC 10341 / NRRL NRS-1264 / Gibson 46).